We begin with the raw amino-acid sequence, 967 residues long: Nonsense-mediated mRNA decay factor SMG8 (967 aa).

The interval 627-702 is disordered; that stretch reads LNEGEDADAD…SCPESQSVAS (76 aa). Residues 628–639 show a composition bias toward acidic residues; sequence NEGEDADADADS. Over residues 643–666 the composition is skewed to low complexity; that stretch reads RSQICSSGQSSRSRSNSSSSDTSS. A compositionally biased stretch (polar residues) spans 686 to 702; that stretch reads ATEALSESCPESQSVAS.

This sequence belongs to the SMG8 family.

Involved in nonsense-mediated decay (NMD) of mRNAs containing premature stop codons. Probable component of kinase complex containing nonC and recruited to stalled ribosomes. The sequence is that of Nonsense-mediated mRNA decay factor SMG8 from Drosophila mojavensis (Fruit fly).